A 301-amino-acid chain; its full sequence is Ubiquinone biosynthesis protein COQ4, mitochondrial (301 aa).

The transit peptide at 1 to 46 (MEVTLKRSAALARQTTPLLRPLRPVATYPSNNNNNNNPTPQQRRPY) directs the protein to the mitochondrion. The tract at residues 14 to 48 (QTTPLLRPLRPVATYPSNNNNNNNPTPQQRRPYSL) is disordered. Polar residues predominate over residues 38-48 (PTPQQRRPYSL). Positions 185, 186, 189, and 201 each coordinate Zn(2+).

It belongs to the COQ4 family. Component of a multi-subunit COQ enzyme complex, composed of at least COQ3, COQ4, COQ5, COQ6, COQ7 and COQ9. Zn(2+) serves as cofactor.

It localises to the mitochondrion inner membrane. The catalysed reaction is a 4-hydroxy-3-methoxy-5-(all-trans-polyprenyl)benzoate + H(+) = a 2-methoxy-6-(all-trans-polyprenyl)phenol + CO2. Its pathway is cofactor biosynthesis; ubiquinone biosynthesis. Lyase that catalyzes the C1-decarboxylation of 4-hydroxy-3-methoxy-5-(all-trans-polyprenyl)benzoic acid into 2-methoxy-6-(all-trans-polyprenyl)phenol during ubiquinone biosynthesis. The protein is Ubiquinone biosynthesis protein COQ4, mitochondrial of Podospora anserina (strain S / ATCC MYA-4624 / DSM 980 / FGSC 10383) (Pleurage anserina).